Consider the following 163-residue polypeptide: Phosphopantetheine adenylyltransferase (163 aa).

Substrate is bound at residue Thr10. ATP is bound by residues 10-11 (TF) and His18. 3 residues coordinate substrate: Lys42, Leu74, and Arg88. Residues 89-91 (GLR), Glu99, and 124-130 (NSFISST) each bind ATP.

This sequence belongs to the bacterial CoaD family. Homohexamer. Mg(2+) is required as a cofactor.

Its subcellular location is the cytoplasm. It catalyses the reaction (R)-4'-phosphopantetheine + ATP + H(+) = 3'-dephospho-CoA + diphosphate. It participates in cofactor biosynthesis; coenzyme A biosynthesis; CoA from (R)-pantothenate: step 4/5. Reversibly transfers an adenylyl group from ATP to 4'-phosphopantetheine, yielding dephospho-CoA (dPCoA) and pyrophosphate. The chain is Phosphopantetheine adenylyltransferase from Shewanella baltica (strain OS155 / ATCC BAA-1091).